The following is a 152-amino-acid chain: Aspartate carbamoyltransferase regulatory chain (152 aa).

Zn(2+) is bound by residues C109, C114, C138, and C141.

Belongs to the PyrI family. Contains catalytic and regulatory chains. It depends on Zn(2+) as a cofactor.

In terms of biological role, involved in allosteric regulation of aspartate carbamoyltransferase. The protein is Aspartate carbamoyltransferase regulatory chain of Thermoplasma volcanium (strain ATCC 51530 / DSM 4299 / JCM 9571 / NBRC 15438 / GSS1).